A 107-amino-acid polypeptide reads, in one-letter code: U1-lycotoxin-Ls1b (107 aa).

The N-terminal stretch at 1–20 (MMKVLVVIALLVTLISYSSS) is a signal peptide. Residues 21-41 (EGIDDLEADELLSLMANEQTR) constitute a propeptide that is removed on maturation. Disulfide bonds link C44/C59, C51/C68, C58/C86, and C70/C84.

Belongs to the neurotoxin 19 (CSTX) family. 04 (U1-Lctx) subfamily. As to expression, expressed by the venom gland.

Its subcellular location is the secreted. The sequence is that of U1-lycotoxin-Ls1b from Lycosa singoriensis (Wolf spider).